The primary structure comprises 219 residues: Transmembrane protein 179B (219 aa).

4 helical membrane-spanning segments follow: residues 9-29 (VELA…AAMT), 65-85 (FVAG…LFWI), 96-116 (GAIG…LVLV), and 167-187 (TSSW…VVQW). Positions 198–219 (ERGDPEWSSETDALVGSRLSHS) are disordered. Phosphoserine is present on residues Ser206 and Ser214.

Belongs to the TMEM179 family.

The protein resides in the membrane. The protein is Transmembrane protein 179B (TMEM179B) of Homo sapiens (Human).